A 451-amino-acid polypeptide reads, in one-letter code: UDP-N-acetylmuramoylalanine--D-glutamate ligase (451 aa).

119–125 (GSNGKTT) provides a ligand contact to ATP.

It belongs to the MurCDEF family.

Its subcellular location is the cytoplasm. The catalysed reaction is UDP-N-acetyl-alpha-D-muramoyl-L-alanine + D-glutamate + ATP = UDP-N-acetyl-alpha-D-muramoyl-L-alanyl-D-glutamate + ADP + phosphate + H(+). It functions in the pathway cell wall biogenesis; peptidoglycan biosynthesis. Its function is as follows. Cell wall formation. Catalyzes the addition of glutamate to the nucleotide precursor UDP-N-acetylmuramoyl-L-alanine (UMA). This is UDP-N-acetylmuramoylalanine--D-glutamate ligase from Geobacillus sp. (strain WCH70).